A 404-amino-acid polypeptide reads, in one-letter code: Cysteine desulfurase IscS (404 aa).

Residues 75–76 (AT), asparagine 155, glutamine 183, and 203–205 (SGH) contribute to the pyridoxal 5'-phosphate site. Position 206 is an N6-(pyridoxal phosphate)lysine (lysine 206). Threonine 243 contacts pyridoxal 5'-phosphate. The Cysteine persulfide intermediate role is filled by cysteine 328. Cysteine 328 is a [2Fe-2S] cluster binding site.

It belongs to the class-V pyridoxal-phosphate-dependent aminotransferase family. NifS/IscS subfamily. As to quaternary structure, homodimer. Forms a heterotetramer with IscU, interacts with other sulfur acceptors. Requires pyridoxal 5'-phosphate as cofactor.

The protein localises to the cytoplasm. The catalysed reaction is (sulfur carrier)-H + L-cysteine = (sulfur carrier)-SH + L-alanine. The protein operates within cofactor biosynthesis; iron-sulfur cluster biosynthesis. Functionally, master enzyme that delivers sulfur to a number of partners involved in Fe-S cluster assembly, tRNA modification or cofactor biosynthesis. Catalyzes the removal of elemental sulfur and selenium atoms from cysteine and selenocysteine to produce alanine. Functions as a sulfur delivery protein for Fe-S cluster synthesis onto IscU, an Fe-S scaffold assembly protein, as well as other S acceptor proteins. Also functions as a selenium delivery protein in the pathway for the biosynthesis of selenophosphate. The protein is Cysteine desulfurase IscS of Escherichia coli (strain K12 / DH10B).